Here is a 241-residue protein sequence, read N- to C-terminus: Carboxy-S-adenosyl-L-methionine synthase 1 (241 aa).

S-adenosyl-L-methionine is bound by residues Tyr37, 61 to 63 (GCS), Asn131, and Arg198.

It belongs to the class I-like SAM-binding methyltransferase superfamily. Cx-SAM synthase family. Homodimer.

It carries out the reaction prephenate + S-adenosyl-L-methionine = carboxy-S-adenosyl-L-methionine + 3-phenylpyruvate + H2O. Its function is as follows. Catalyzes the conversion of S-adenosyl-L-methionine (SAM) to carboxy-S-adenosyl-L-methionine (Cx-SAM). This is Carboxy-S-adenosyl-L-methionine synthase 1 from Yersinia pseudotuberculosis serotype IB (strain PB1/+).